Here is a 1087-residue protein sequence, read N- to C-terminus: Exoglucanase XynX (1087 aa).

The first 30 residues, 1 to 30, serve as a signal peptide directing secretion; it reads MKNNLSKFVSIFTAFIMIFGTSLFFPHVSA. Positions 37-188 constitute a CBM-cenC domain; that stretch reads ANLVSNGDFE…YIDDVVVTPQ (152 aa). The GH10 domain occupies 204-527; the sequence is QNDIPDLSSV…KPAYWAIADP (324 aa). The active-site Proton donor is the E347. Residue D389 is part of the active site. The active-site Nucleophile is the E452. 3 consecutive SLH domains span residues 903-966, 967-1025, and 1028-1087; these read KKSV…YNGE, FSDV…KEEN, and ATSF…SNNL.

The protein belongs to the glycosyl hydrolase 10 (cellulase F) family.

The enzyme catalyses Hydrolysis of (1-&gt;4)-beta-D-glucosidic linkages in cellulose and cellotetraose, releasing cellobiose from the non-reducing ends of the chains.. This chain is Exoglucanase XynX (xynX), found in Acetivibrio thermocellus (Hungateiclostridium thermocellum).